We begin with the raw amino-acid sequence, 240 residues long: Proteasome subunit alpha (240 aa).

It belongs to the peptidase T1A family. The 20S proteasome core is composed of 14 alpha and 14 beta subunits that assemble into four stacked heptameric rings, resulting in a barrel-shaped structure. The two inner rings, each composed of seven catalytic beta subunits, are sandwiched by two outer rings, each composed of seven alpha subunits. The catalytic chamber with the active sites is on the inside of the barrel. Has a gated structure, the ends of the cylinder being occluded by the N-termini of the alpha-subunits. Is capped at one or both ends by the proteasome regulatory ATPase, PAN.

It is found in the cytoplasm. Its activity is regulated as follows. The formation of the proteasomal ATPase PAN-20S proteasome complex, via the docking of the C-termini of PAN into the intersubunit pockets in the alpha-rings, triggers opening of the gate for substrate entry. Interconversion between the open-gate and close-gate conformations leads to a dynamic regulation of the 20S proteasome proteolysis activity. Its function is as follows. Component of the proteasome core, a large protease complex with broad specificity involved in protein degradation. The polypeptide is Proteasome subunit alpha (Methanoculleus marisnigri (strain ATCC 35101 / DSM 1498 / JR1)).